Here is a 441-residue protein sequence, read N- to C-terminus: UDP-N-acetylglucosamine 1-carboxyvinyltransferase 1 (441 aa).

42 to 43 (KN) contacts phosphoenolpyruvate. Residue Arg-117 coordinates UDP-N-acetyl-alpha-D-glucosamine. The active-site Proton donor is Cys-141. Cys-141 carries the 2-(S-cysteinyl)pyruvic acid O-phosphothioketal modification. Residues Asp-330 and Ile-352 each contribute to the UDP-N-acetyl-alpha-D-glucosamine site.

This sequence belongs to the EPSP synthase family. MurA subfamily.

It is found in the cytoplasm. It carries out the reaction phosphoenolpyruvate + UDP-N-acetyl-alpha-D-glucosamine = UDP-N-acetyl-3-O-(1-carboxyvinyl)-alpha-D-glucosamine + phosphate. The protein operates within cell wall biogenesis; peptidoglycan biosynthesis. In terms of biological role, cell wall formation. Adds enolpyruvyl to UDP-N-acetylglucosamine. This Symbiobacterium thermophilum (strain DSM 24528 / JCM 14929 / IAM 14863 / T) protein is UDP-N-acetylglucosamine 1-carboxyvinyltransferase 1.